Consider the following 705-residue polypeptide: Putative membrane protein SCO0839 (705 aa).

12 consecutive transmembrane segments (helical) span residues 16-36, 177-197, 202-222, 237-257, 281-301, 316-336, 373-393, 529-549, 554-574, 587-607, 627-647, and 648-668; these read WLVP…LGPY, GIDG…LLLV, LLPL…CAIV, VQGI…LLLT, SWGA…ALLL, IGIV…LVLL, IWAL…TLSS, LIVP…LRSL, LLVA…ALVF, VPLY…IFLM, LTAT…TFAA, and LGVI…FGVL.

The protein belongs to the resistance-nodulation-cell division (RND) (TC 2.A.6) family. MmpL subfamily.

It localises to the cell membrane. This Streptomyces coelicolor (strain ATCC BAA-471 / A3(2) / M145) protein is Putative membrane protein SCO0839.